The following is a 195-amino-acid chain: Guanylate kinase (195 aa).

A Guanylate kinase-like domain is found at 5 to 183 (GILFVISGPS…ALQKITAIII (179 aa)). 12-19 (GPSGVGKG) is a binding site for ATP.

Belongs to the guanylate kinase family.

The protein localises to the cytoplasm. The enzyme catalyses GMP + ATP = GDP + ADP. Essential for recycling GMP and indirectly, cGMP. The sequence is that of Guanylate kinase from Syntrophomonas wolfei subsp. wolfei (strain DSM 2245B / Goettingen).